A 253-amino-acid polypeptide reads, in one-letter code: MHRRPSKQQVEREILSEKIKAVFHEHKGRYGAVRITKVLHNTGIMTNTKRVGKLMHLMGLYAKGSRYKYKHYNRKGASLSRPNLINQIFKATAPNKVWLGDMTYIPTKEGTLYLAVNIDVFSRKIVGWSMSSRMQDKLVRDCFLQACGKEHPQPGLIVHTDQGSQYTSSRYQSTLRQVGAQSSMSRKGNPYDNAMMESFYKTLKRELINDAHFETRAEATQEIFKYIETYYNTKRMHSGLDYKSPKDFEKYNS.

The Integrase catalytic domain occupies 90–253; that stretch reads KATAPNKVWL…SPKDFEKYNS (164 aa).

The protein belongs to the transposase IS3/IS150/IS904 family.

In terms of biological role, involved in the transposition of the insertion sequence. The chain is Transposase for insertion sequence element IS904 (nisX1) from Lactococcus lactis subsp. lactis (strain IL1403) (Streptococcus lactis).